The primary structure comprises 359 residues: Heat-inducible transcription repressor HrcA (359 aa).

Belongs to the HrcA family.

Negative regulator of class I heat shock genes (grpE-dnaK-dnaJ and groELS operons). Prevents heat-shock induction of these operons. The polypeptide is Heat-inducible transcription repressor HrcA (Roseiflexus sp. (strain RS-1)).